Here is a 424-residue protein sequence, read N- to C-terminus: Glutathione reductase (424 aa).

Position 8 (Lys8) interacts with FAD. Tyr56 contacts glutathione. Residue Ala72 coordinates FAD. NADP(+) is bound by residues Ala137, Ile140, Glu143, Arg160, Arg166, and Gly236. FAD is bound at residue Asp277. Residue Leu283 coordinates NADP(+). Thr285 contacts FAD. Arg293 is a glutathione binding site. Val316 serves as a coordination point for NADP(+). An FAD-binding site is contributed by His413. The active-site Proton acceptor is His413.

Belongs to the class-I pyridine nucleotide-disulfide oxidoreductase family. As to quaternary structure, homodimer; disulfide-linked. The cofactor is FAD.

It localises to the mitochondrion. Its subcellular location is the cytoplasm. The enzyme catalyses 2 glutathione + NADP(+) = glutathione disulfide + NADPH + H(+). Catalyzes the reduction of glutathione disulfide (GSSG) to reduced glutathione (GSH). Constitutes the major mechanism to maintain a high GSH:GSSG ratio in the cytosol. This Rattus norvegicus (Rat) protein is Glutathione reductase (Gsr).